A 61-amino-acid chain; its full sequence is Large ribosomal subunit protein eL24 (61 aa).

The Zn(2+) site is built by Cys-7, Cys-10, Cys-33, and Cys-37. The C4-type zinc-finger motif lies at 7–37 (CTYCGRSIEPGTGLMYVKNDGSVLWFCSSKC).

Belongs to the eukaryotic ribosomal protein eL24 family. Part of the 50S ribosomal subunit. Forms a cluster with proteins L3 and L14. Zn(2+) serves as cofactor.

In terms of biological role, binds to the 23S rRNA. The sequence is that of Large ribosomal subunit protein eL24 from Hyperthermus butylicus (strain DSM 5456 / JCM 9403 / PLM1-5).